The sequence spans 1416 residues: DNA-directed RNA polymerase subunit beta' (1416 aa).

Cys71, Cys73, Cys86, and Cys89 together coordinate Zn(2+). Asp461, Asp463, and Asp465 together coordinate Mg(2+). The Zn(2+) site is built by Cys815, Cys889, Cys896, and Cys899.

This sequence belongs to the RNA polymerase beta' chain family. As to quaternary structure, the RNAP catalytic core consists of 2 alpha, 1 beta, 1 beta' and 1 omega subunit. When a sigma factor is associated with the core the holoenzyme is formed, which can initiate transcription. Mg(2+) is required as a cofactor. Requires Zn(2+) as cofactor.

It catalyses the reaction RNA(n) + a ribonucleoside 5'-triphosphate = RNA(n+1) + diphosphate. DNA-dependent RNA polymerase catalyzes the transcription of DNA into RNA using the four ribonucleoside triphosphates as substrates. In Haemophilus influenzae (strain PittGG), this protein is DNA-directed RNA polymerase subunit beta'.